A 122-amino-acid polypeptide reads, in one-letter code: Small ribosomal subunit protein uS13 (122 aa).

Positions 96 to 122 (LPCRGQRTHTNARTRKGPRKPIAGKKK) are disordered.

The protein belongs to the universal ribosomal protein uS13 family. In terms of assembly, part of the 30S ribosomal subunit. Forms a loose heterodimer with protein S19. Forms two bridges to the 50S subunit in the 70S ribosome.

Its function is as follows. Located at the top of the head of the 30S subunit, it contacts several helices of the 16S rRNA. In the 70S ribosome it contacts the 23S rRNA (bridge B1a) and protein L5 of the 50S subunit (bridge B1b), connecting the 2 subunits; these bridges are implicated in subunit movement. Contacts the tRNAs in the A and P-sites. The sequence is that of Small ribosomal subunit protein uS13 from Magnetococcus marinus (strain ATCC BAA-1437 / JCM 17883 / MC-1).